A 347-amino-acid polypeptide reads, in one-letter code: NADH-ubiquinone oxidoreductase chain 2 (347 aa).

11 helical membrane passes run 3–23 (PIIF…VMIS), 25–45 (HWLL…PIMM), 67–87 (SMLL…WTVM), 96–116 (MLMT…FWVP), 122–142 (IPLS…MSVL), 145–165 (IFPS…ILIG), 178–198 (IMAY…PYNP), 200–220 (MTLL…TMFM), 239–259 (IMTV…PLSG), 274–294 (NSII…YFYM), and 325–345 (FLPT…MLSV).

Belongs to the complex I subunit 2 family. Core subunit of respiratory chain NADH dehydrogenase (Complex I) which is composed of 45 different subunits. Interacts with TMEM242.

It localises to the mitochondrion inner membrane. The catalysed reaction is a ubiquinone + NADH + 5 H(+)(in) = a ubiquinol + NAD(+) + 4 H(+)(out). Functionally, core subunit of the mitochondrial membrane respiratory chain NADH dehydrogenase (Complex I) which catalyzes electron transfer from NADH through the respiratory chain, using ubiquinone as an electron acceptor. Essential for the catalytic activity and assembly of complex I. The sequence is that of NADH-ubiquinone oxidoreductase chain 2 from Bos indicus (Zebu).